The sequence spans 449 residues: Exodeoxyribonuclease 7 large subunit (449 aa).

It belongs to the XseA family. In terms of assembly, heterooligomer composed of large and small subunits.

The protein localises to the cytoplasm. The catalysed reaction is Exonucleolytic cleavage in either 5'- to 3'- or 3'- to 5'-direction to yield nucleoside 5'-phosphates.. In terms of biological role, bidirectionally degrades single-stranded DNA into large acid-insoluble oligonucleotides, which are then degraded further into small acid-soluble oligonucleotides. The protein is Exodeoxyribonuclease 7 large subunit of Salmonella newport (strain SL254).